A 179-amino-acid chain; its full sequence is Large ribosomal subunit protein uL6 (179 aa).

It belongs to the universal ribosomal protein uL6 family. In terms of assembly, part of the 50S ribosomal subunit.

Its function is as follows. This protein binds to the 23S rRNA, and is important in its secondary structure. It is located near the subunit interface in the base of the L7/L12 stalk, and near the tRNA binding site of the peptidyltransferase center. The chain is Large ribosomal subunit protein uL6 from Prochlorococcus marinus (strain MIT 9312).